Reading from the N-terminus, the 1134-residue chain is Tetrathionate reductase subunit A (1134 aa).

The segment at residues 1-31 (MQLSRRDFIKGLVAVGSASVFLAGYSETVDR) is a signal peptide (tat-type signal). One can recognise a 4Fe-4S Mo/W bis-MGD-type domain in the interval 46–133 (GRIVHSACLG…DGIHYLYDPY (88 aa)). [4Fe-4S] cluster is bound by residues Cys-53, Cys-56, Cys-60, and Cys-119.

It belongs to the prokaryotic molybdopterin-containing oxidoreductase family. As to quaternary structure, probably composed of three subunits: TtrA, TtrB and TtrC. Precursor interacts with TtrD. [4Fe-4S] cluster is required as a cofactor. Mo-bis(molybdopterin guanine dinucleotide) serves as cofactor. In terms of processing, exported by the Tat system. The position of the signal peptide cleavage has not been experimentally proven.

Its subcellular location is the cell membrane. Functionally, part of a membrane-bound tetrathionate reductase that catalyzes the reduction of tetrathionate to thiosulfate. TtrA is the catalytic subunit. The chain is Tetrathionate reductase subunit A (ttrA) from Archaeoglobus fulgidus (strain ATCC 49558 / DSM 4304 / JCM 9628 / NBRC 100126 / VC-16).